The chain runs to 196 residues: Nucleoside triphosphate pyrophosphatase (196 aa).

Catalysis depends on Asp70, which acts as the Proton acceptor.

Belongs to the Maf family. It depends on a divalent metal cation as a cofactor.

It is found in the cytoplasm. The enzyme catalyses a ribonucleoside 5'-triphosphate + H2O = a ribonucleoside 5'-phosphate + diphosphate + H(+). The catalysed reaction is a 2'-deoxyribonucleoside 5'-triphosphate + H2O = a 2'-deoxyribonucleoside 5'-phosphate + diphosphate + H(+). Its function is as follows. Nucleoside triphosphate pyrophosphatase. May have a dual role in cell division arrest and in preventing the incorporation of modified nucleotides into cellular nucleic acids. This chain is Nucleoside triphosphate pyrophosphatase, found in Gloeothece citriformis (strain PCC 7424) (Cyanothece sp. (strain PCC 7424)).